The following is a 512-amino-acid chain: Cytochrome P450 monooxygenase paxQ (512 aa).

2 helical membrane-spanning segments follow: residues Phe3–Ile23 and Leu35–Leu55. Cys453 is a heme binding site.

The protein belongs to the cytochrome P450 family. Requires heme as cofactor.

The protein resides in the membrane. It functions in the pathway secondary metabolite biosynthesis. In terms of biological role, cytochrome P450 monooxygenase; part of the gene cluster that mediates the biosynthesis of paxilline, a mycotoxin that acts as an inhibitor of mammalian maxi-K channels. PaxG, the geranylgeranyl diphosphate (GGPP) synthase is proposed to catalyze the first step in paxilline biosynthesis. Condensation of indole-3-glycerol phosphate with GGPP by paxC then forms 3-geranylgeranylindole (3-GGI), followed by epoxidation and cyclization of this intermediate (by paxM and paxB) to form paspaline. Paspaline is subsequently converted to 13-desoxypaxilline by paxP, the latter being then converted to paxilline by paxQ. Finally paxilline can be mono- and di-prenylated by paxD. PaxQ can also utilized beta-paxitriol and alpha-PC-M6 as substrates converting them to alpha-paxitriol. In Penicillium paxilli, this protein is Cytochrome P450 monooxygenase paxQ.